Here is a 428-residue protein sequence, read N- to C-terminus: Stabilizer of axonemal microtubules 4 (428 aa).

The tract at residues 201–231 (AKEETGFTEESNKNPIVFQPPSQALPGDPVL) is disordered.

In terms of assembly, microtubule inner protein component of sperm flagellar doublet microtubules. Interacts with PPP1CA.

The protein localises to the cell projection. Its subcellular location is the cilium. It localises to the cytoplasm. The protein resides in the cytoskeleton. It is found in the flagellum axoneme. This Bos taurus (Bovine) protein is Stabilizer of axonemal microtubules 4.